The primary structure comprises 694 residues: Elongation factor G (694 aa).

The tr-type G domain maps to 8-287; it reads EDYRNFGIMA…AVVSYLPSPI (280 aa). Residues 17 to 24, 86 to 90, and 140 to 143 each bind GTP; these read AHIDAGKT, DTPGH, and NKMD.

This sequence belongs to the TRAFAC class translation factor GTPase superfamily. Classic translation factor GTPase family. EF-G/EF-2 subfamily.

It localises to the cytoplasm. In terms of biological role, catalyzes the GTP-dependent ribosomal translocation step during translation elongation. During this step, the ribosome changes from the pre-translocational (PRE) to the post-translocational (POST) state as the newly formed A-site-bound peptidyl-tRNA and P-site-bound deacylated tRNA move to the P and E sites, respectively. Catalyzes the coordinated movement of the two tRNA molecules, the mRNA and conformational changes in the ribosome. This chain is Elongation factor G, found in Bartonella tribocorum (strain CIP 105476 / IBS 506).